Reading from the N-terminus, the 259-residue chain is Hydroxyacylglutathione hydrolase (259 aa).

Zn(2+)-binding residues include His-56, His-58, Asp-60, His-61, His-112, Asp-133, and His-171.

It belongs to the metallo-beta-lactamase superfamily. Glyoxalase II family. Monomer. The cofactor is Zn(2+).

It carries out the reaction an S-(2-hydroxyacyl)glutathione + H2O = a 2-hydroxy carboxylate + glutathione + H(+). Its pathway is secondary metabolite metabolism; methylglyoxal degradation; (R)-lactate from methylglyoxal: step 2/2. Its function is as follows. Thiolesterase that catalyzes the hydrolysis of S-D-lactoyl-glutathione to form glutathione and D-lactic acid. This chain is Hydroxyacylglutathione hydrolase, found in Pseudomonas entomophila (strain L48).